A 500-amino-acid polypeptide reads, in one-letter code: ATP synthase subunit alpha (500 aa).

167–174 (GDRQTGKT) is an ATP binding site.

It belongs to the ATPase alpha/beta chains family. F-type ATPases have 2 components, CF(1) - the catalytic core - and CF(0) - the membrane proton channel. CF(1) has five subunits: alpha(3), beta(3), gamma(1), delta(1), epsilon(1). CF(0) has three main subunits: a(1), b(2) and c(9-12). The alpha and beta chains form an alternating ring which encloses part of the gamma chain. CF(1) is attached to CF(0) by a central stalk formed by the gamma and epsilon chains, while a peripheral stalk is formed by the delta and b chains.

It is found in the cell inner membrane. The enzyme catalyses ATP + H2O + 4 H(+)(in) = ADP + phosphate + 5 H(+)(out). Functionally, produces ATP from ADP in the presence of a proton gradient across the membrane. The alpha chain is a regulatory subunit. The polypeptide is ATP synthase subunit alpha (Wolinella succinogenes (strain ATCC 29543 / DSM 1740 / CCUG 13145 / JCM 31913 / LMG 7466 / NCTC 11488 / FDC 602W) (Vibrio succinogenes)).